Reading from the N-terminus, the 332-residue chain is Geranylgeranyl pyrophosphate synthase 2 (332 aa).

3 residues coordinate isopentenyl diphosphate: K55, R58, and H87. Mg(2+) is bound by residues D94 and D98. Residue R103 coordinates dimethylallyl diphosphate. R104 is a binding site for isopentenyl diphosphate. Residues K181, T182, and Q218 each coordinate dimethylallyl diphosphate. D221 serves as a coordination point for Mg(2+). Dimethylallyl diphosphate contacts are provided by N225, K235, and K245.

This sequence belongs to the FPP/GGPP synthase family. Mg(2+) serves as cofactor.

The enzyme catalyses isopentenyl diphosphate + dimethylallyl diphosphate = (2E)-geranyl diphosphate + diphosphate. It carries out the reaction isopentenyl diphosphate + (2E)-geranyl diphosphate = (2E,6E)-farnesyl diphosphate + diphosphate. It catalyses the reaction isopentenyl diphosphate + (2E,6E)-farnesyl diphosphate = (2E,6E,10E)-geranylgeranyl diphosphate + diphosphate. Its function is as follows. Geranylgeranyl pyrophosphate synthase; part of the gene cluster 3 that mediates the biosynthesis of an isoprenoid secondary metabolite. The chain is Geranylgeranyl pyrophosphate synthase 2 (GGS2) from Zymoseptoria tritici (strain CBS 115943 / IPO323) (Speckled leaf blotch fungus).